A 176-amino-acid chain; its full sequence is MSVEETGWVTVALVGKTRGNRGEVTAVVLSSRPERYQDLQEVFLFGPGLPEAGERREVEEAWYHLQTLVLKFRGVDTISEAESLYGAEVRIPASQRISLDEGEYFESDLIGCEVVDRQSGQSLGKVSAWDDGGGSGLLVVGDLLIPFARAICVEINPAAKRITVELPEGLKDLNRP.

Residues 101 to 170 (EGEYFESDLI…RITVELPEGL (70 aa)) enclose the PRC barrel domain.

It belongs to the RimM family. As to quaternary structure, binds ribosomal protein uS19.

It is found in the cytoplasm. An accessory protein needed during the final step in the assembly of 30S ribosomal subunit, possibly for assembly of the head region. Essential for efficient processing of 16S rRNA. May be needed both before and after RbfA during the maturation of 16S rRNA. It has affinity for free ribosomal 30S subunits but not for 70S ribosomes. This is Ribosome maturation factor RimM from Solibacter usitatus (strain Ellin6076).